Reading from the N-terminus, the 175-residue chain is Protein-export protein SecB (175 aa).

This sequence belongs to the SecB family. Homotetramer, a dimer of dimers. One homotetramer interacts with 1 SecA dimer.

The protein localises to the cytoplasm. Its function is as follows. One of the proteins required for the normal export of preproteins out of the cell cytoplasm. It is a molecular chaperone that binds to a subset of precursor proteins, maintaining them in a translocation-competent state. It also specifically binds to its receptor SecA. The polypeptide is Protein-export protein SecB (Ehrlichia chaffeensis (strain ATCC CRL-10679 / Arkansas)).